The chain runs to 75 residues: Small ribosomal subunit protein bS18 (75 aa).

Belongs to the bacterial ribosomal protein bS18 family. In terms of assembly, part of the 30S ribosomal subunit. Forms a tight heterodimer with protein bS6.

In terms of biological role, binds as a heterodimer with protein bS6 to the central domain of the 16S rRNA, where it helps stabilize the platform of the 30S subunit. The sequence is that of Small ribosomal subunit protein bS18 from Clostridioides difficile (strain 630) (Peptoclostridium difficile).